A 326-amino-acid chain; its full sequence is Ankyrin repeat domain-containing protein 9 (326 aa).

The tract at residues 1-20 is disordered; it reads MPWDTRPGRSANGGPEGPGA. The stretch at 70–99 is one ANK 1 repeat; it reads SPSEALLYALVHDHQAYAHYLLATFPRCAL. The Important role in both nutrient sensing and binding/regulation of IMPDH2 signature appears at 108–109; the sequence is CC. 2 ANK repeats span residues 111 to 140 and 157 to 186; these read APGP…DFPV and GGGT…SPGL.

Part of an E3 ubiquitin-protein ligase complex with Elongin BC (ELOB and ELOC), CUL5 and ANKRD9. Interacts with IMPDH2; leading to ubiquitination of IMPDH2 and its subsequent proteasomal degradation.

The protein localises to the cytoplasmic vesicle. The protein resides in the cytoplasm. Its subcellular location is the cytosol. It functions in the pathway protein modification; protein ubiquitination. Functionally, substrate receptor subunit of a cullin-RING superfamily E3 ligase complex (CUL5-based E3 ubiquitin ligase complex) which mediates the ubiquitination and subsequent proteasomal degradation of target proteins. Depending of the metabolic state of the cell, promotes the proteasomal degradation of IMPDH2, the rate-limiting enzyme in GTP biosynthesis or protects IMPDH2 by stabilizing IMPDH2 filaments assembly. Implicated in different cellular processes, like copper homeostasis and cell proliferation. This is Ankyrin repeat domain-containing protein 9 (Ankrd9) from Mus musculus (Mouse).